We begin with the raw amino-acid sequence, 129 residues long: Large ribosomal subunit protein bL20 (129 aa).

Belongs to the bacterial ribosomal protein bL20 family.

Functionally, binds directly to 23S ribosomal RNA and is necessary for the in vitro assembly process of the 50S ribosomal subunit. It is not involved in the protein synthesizing functions of that subunit. The polypeptide is Large ribosomal subunit protein bL20 (Kineococcus radiotolerans (strain ATCC BAA-149 / DSM 14245 / SRS30216)).